The chain runs to 164 residues: 5-formyltetrahydrofolate cyclo-ligase (164 aa).

3-7 (KNALR) provides a ligand contact to ATP. 2 residues coordinate substrate: glutamate 50 and glutamate 55. An ATP-binding site is contributed by 115–123 (RLGFGKGYY). Aspartate 124 is a Mg(2+) binding site. Residues arginine 125 and tryptophan 153 each coordinate ATP. Aspartate 154 serves as a coordination point for Mg(2+).

The protein belongs to the 5-formyltetrahydrofolate cyclo-ligase family. As to quaternary structure, monomer or homodimer. Mg(2+) serves as cofactor. The cofactor is Mn(2+). Requires Ca(2+) as cofactor. Zn(2+) is required as a cofactor. It depends on Fe(2+) as a cofactor. Co(2+) serves as cofactor. The cofactor is Cu(2+).

It is found in the cytoplasm. It carries out the reaction (6S)-5-formyl-5,6,7,8-tetrahydrofolate + ATP = (6R)-5,10-methenyltetrahydrofolate + ADP + phosphate. Its function is as follows. Involved in folate metabolism. Catalyzes the irreversible conversion of 5-formyltetrahydrofolate (5-FTHF) to yield 5,10-methenyltetrahydrofolate. The polypeptide is 5-formyltetrahydrofolate cyclo-ligase (Mycoplasma pneumoniae (strain ATCC 29342 / M129 / Subtype 1) (Mycoplasmoides pneumoniae)).